The primary structure comprises 118 residues: Large ribosomal subunit protein bL20 (118 aa).

The protein belongs to the bacterial ribosomal protein bL20 family.

Its function is as follows. Binds directly to 23S ribosomal RNA and is necessary for the in vitro assembly process of the 50S ribosomal subunit. It is not involved in the protein synthesizing functions of that subunit. The polypeptide is Large ribosomal subunit protein bL20 (Fervidobacterium nodosum (strain ATCC 35602 / DSM 5306 / Rt17-B1)).